The primary structure comprises 648 residues: Copper methylamine oxidase (648 aa).

The propeptide occupies 1–9 (MTLNAESEA). Substrate is bound at residue 299-310 (AFDSGEYNIGNM). The active-site Proton acceptor is Asp301. Cys320 and Cys346 are disulfide-bonded. 382-387 (VANYEY) lines the substrate pocket. Tyr385 acts as the Schiff-base intermediate with substrate; via topaquinone in catalysis. Position 385 is a 2',4',5'-topaquinone (Tyr385). Residues His436 and His438 each coordinate Cu cation. Mn(2+) contacts are provided by Asp445, Phe446, and Asp584. His595 contributes to the Cu cation binding site. Positions 629–648 (PTSTSTTQTGEADTCCHTDK) are disordered.

Belongs to the copper/topaquinone oxidase family. As to quaternary structure, homodimer. Requires Cu cation as cofactor. The cofactor is Zn(2+). L-topaquinone is required as a cofactor. Mn(2+) serves as cofactor. Topaquinone (TPQ) is generated by copper-dependent autoxidation of a specific tyrosyl residue.

The enzyme catalyses a primary methyl amine + O2 + H2O = an aldehyde + H2O2 + NH4(+). This chain is Copper methylamine oxidase (maoII), found in Arthrobacter sp. (strain P1).